We begin with the raw amino-acid sequence, 321 residues long: Gap junction delta-2 protein (321 aa).

Over 1–19 the chain is Cytoplasmic; it reads MGEWTILERLLEAAVQQHS. A helical transmembrane segment spans residues 20-42; the sequence is TMIGRILLTVVVIFRILIVAIVG. Residues 43–75 lie on the Extracellular side of the membrane; it reads ETVYDDEQTMFVCNTLQPGCNQACYDRAFPISH. Residues 76-98 form a helical membrane-spanning segment; that stretch reads IRYWVFQIIMVCTPSLCFITYSV. Residues 99–197 lie on the Cytoplasmic side of the membrane; the sequence is HQSAKQRERR…KLRRQEGISR (99 aa). The tract at residues 120–141 is disordered; that stretch reads PAESIGGPGGTGGGGSGGSKRE. Residues 125–137 show a composition bias toward gly residues; the sequence is GGPGGTGGGGSGG. A helical membrane pass occupies residues 198–220; that stretch reads FYIIQVVFRNALEIGFLVGQYFL. Topologically, residues 221-252 are extracellular; it reads YGFSVPGLYECNRYPCIKEVECYVSRPTEKTV. The helical transmembrane segment at 253 to 275 threads the bilayer; that stretch reads FLVFMFAVSGICVVLNLAELNHL. Residues 276 to 321 lie on the Cytoplasmic side of the membrane; it reads GWRKIKLAVRGAQAKRKSVYEIRNKDLPRVSVPNFGRTQSSDSAYV.

This sequence belongs to the connexin family. Delta-type subfamily. In terms of assembly, a connexon is composed of a hexamer of connexins. As to expression, highly expressed in neurons.

The protein resides in the cell membrane. It localises to the cell junction. Its subcellular location is the gap junction. Functionally, one gap junction consists of a cluster of closely packed pairs of transmembrane channels, the connexons, through which materials of low MW diffuse from one cell to a neighboring cell. The protein is Gap junction delta-2 protein (Gjd2) of Rattus norvegicus (Rat).